Here is a 361-residue protein sequence, read N- to C-terminus: Chorismate synthase (361 aa).

Residues arginine 48 and arginine 54 each coordinate NADP(+). Residues 125-127 (RSS), 238-239 (NA), glycine 278, 293-297 (KPTSS), and arginine 319 contribute to the FMN site.

It belongs to the chorismate synthase family. As to quaternary structure, homotetramer. FMNH2 serves as cofactor.

The catalysed reaction is 5-O-(1-carboxyvinyl)-3-phosphoshikimate = chorismate + phosphate. It participates in metabolic intermediate biosynthesis; chorismate biosynthesis; chorismate from D-erythrose 4-phosphate and phosphoenolpyruvate: step 7/7. In terms of biological role, catalyzes the anti-1,4-elimination of the C-3 phosphate and the C-6 proR hydrogen from 5-enolpyruvylshikimate-3-phosphate (EPSP) to yield chorismate, which is the branch point compound that serves as the starting substrate for the three terminal pathways of aromatic amino acid biosynthesis. This reaction introduces a second double bond into the aromatic ring system. The sequence is that of Chorismate synthase from Escherichia coli (strain SE11).